The following is a 295-amino-acid chain: UDP-N-acetylenolpyruvoylglucosamine reductase (295 aa).

The FAD-binding PCMH-type domain maps to 27–194 (GVGGEAEVWF…TRVRLKLRRS (168 aa)). Arg174 is an active-site residue. Cys221 (proton donor) is an active-site residue. Glu287 is an active-site residue.

Belongs to the MurB family. FAD serves as cofactor.

The protein localises to the cytoplasm. The catalysed reaction is UDP-N-acetyl-alpha-D-muramate + NADP(+) = UDP-N-acetyl-3-O-(1-carboxyvinyl)-alpha-D-glucosamine + NADPH + H(+). It participates in cell wall biogenesis; peptidoglycan biosynthesis. Functionally, cell wall formation. This chain is UDP-N-acetylenolpyruvoylglucosamine reductase, found in Deinococcus geothermalis (strain DSM 11300 / CIP 105573 / AG-3a).